The sequence spans 137 residues: Global transcriptional regulator Spx (137 aa).

Cysteine 10 and cysteine 13 are joined by a disulfide.

This sequence belongs to the ArsC family. Spx subfamily. As to quaternary structure, interacts with the C-terminal domain of the alpha subunit of the RNAP.

The protein localises to the cytoplasm. Functionally, global transcriptional regulator that plays a key role in stress response and exerts either positive or negative regulation of genes. Acts by interacting with the C-terminal domain of the alpha subunit of the RNA polymerase (RNAP). This interaction can enhance binding of RNAP to the promoter region of target genes and stimulate their transcription, or block interaction of RNAP with activator. This Streptococcus mutans serotype c (strain ATCC 700610 / UA159) protein is Global transcriptional regulator Spx.